Here is a 203-residue protein sequence, read N- to C-terminus: Large ribosomal subunit protein uL13 (203 aa).

Ala-2 carries the post-translational modification N-acetylalanine. The residue at position 59 (Arg-59) is a Citrulline. A Phosphoserine modification is found at Ser-77. Arg-140 is modified (citrulline). The residue at position 191 (Lys-191) is an N6-acetyllysine.

It belongs to the universal ribosomal protein uL13 family. As to quaternary structure, component of the 60S ribosome. Component of the GAIT complex. Interacts with EIF4G1. In terms of processing, phosphorylation at Ser-77 upon interferon-gamma treatment in macrophages involves a DAPK1-DAPK3 kinase cascade and is causing release from the ribosome, association with the GAIT complex and subsequent involvement in transcript-selective translation inhibition. Citrullinated by PADI4.

The protein localises to the cytoplasm. Its function is as follows. Associated with ribosomes but is not required for canonical ribosome function and has extra-ribosomal functions. Component of the GAIT (gamma interferon-activated inhibitor of translation) complex which mediates interferon-gamma-induced transcript-selective translation inhibition in inflammation processes. Upon interferon-gamma activation and subsequent phosphorylation dissociates from the ribosome and assembles into the GAIT complex which binds to stem loop-containing GAIT elements in the 3'-UTR of diverse inflammatory mRNAs (such as ceruplasmin) and suppresses their translation. In the GAIT complex interacts with m7G cap-bound eIF4G at or near the eIF3-binding site and blocks the recruitment of the 43S ribosomal complex. Involved in methylation of rRNA. The protein is Large ribosomal subunit protein uL13 (RPL13A) of Bos taurus (Bovine).